The primary structure comprises 202 residues: Arenicin-1 (202 aa).

An N-terminal signal peptide occupies residues 1–25 (MTSTQSVAVCATLILAIFCVNDIHC). Positions 26–181 (DPIAEARAAA…SGDNNEPEKR (156 aa)) are excised as a propeptide. In terms of domain architecture, BRICHOS spans 73 to 168 (GDGVEGSVMV…ACQGKSVYWL (96 aa)). 2 cysteine pairs are disulfide-bonded: cysteine 100–cysteine 160 and cysteine 184–cysteine 201.

Functionally, has antimicrobial activity against the Gram-negative bacteria E.coli and P.mirabilis, the Gram-positive bacterium L.monocytogenes and the yeast C.albicans. The protein is Arenicin-1 of Arenicola marina (Lugworm).